A 376-amino-acid chain; its full sequence is tRNA-specific 2-thiouridylase MnmA (376 aa).

Residues 16–23 (AMSGGVDS) and Leu-42 contribute to the ATP site. Cys-111 serves as the catalytic Nucleophile. A disulfide bridge connects residues Cys-111 and Cys-210. Residue Gly-135 participates in ATP binding. The interaction with tRNA stretch occupies residues 158–160 (KDQ). Cys-210 serves as the catalytic Cysteine persulfide intermediate.

The protein belongs to the MnmA/TRMU family.

It is found in the cytoplasm. It catalyses the reaction S-sulfanyl-L-cysteinyl-[protein] + uridine(34) in tRNA + AH2 + ATP = 2-thiouridine(34) in tRNA + L-cysteinyl-[protein] + A + AMP + diphosphate + H(+). Catalyzes the 2-thiolation of uridine at the wobble position (U34) of tRNA, leading to the formation of s(2)U34. This Streptomyces avermitilis (strain ATCC 31267 / DSM 46492 / JCM 5070 / NBRC 14893 / NCIMB 12804 / NRRL 8165 / MA-4680) protein is tRNA-specific 2-thiouridylase MnmA.